Consider the following 1008-residue polypeptide: RNA cytidine acetyltransferase (1008 aa).

ATP is bound by residues 282 to 291 (GRGKSAALGL) and R443. In terms of domain architecture, N-acetyltransferase spans 531–713 (CLLGPVQRMD…VPVYLSQKSN (183 aa)). Acetyl-CoA contacts are provided by residues 601-603 (VAT), 608-614 (QRMGYGK), and N700. S907 is modified (phosphoserine). Residues 950–1008 (ALETNGTGGGSGLLSVKSGVKRLDGPIETREDGDLAAPLSKKKKKNNPKQRRSQGKSLI) form a disordered region. A compositionally biased stretch (basic and acidic residues) spans 970–982 (KRLDGPIETREDG). The segment covering 989-1008 (SKKKKKNNPKQRRSQGKSLI) has biased composition (basic residues).

This sequence belongs to the RNA cytidine acetyltransferase family. NAT10 subfamily. As to quaternary structure, component of the PRC1 complex (PSC, PC, PH and dRING1) in 0-12 hours Drosophila embryos. This complex is distinct from the Esc/E(z) complex, which contains many other PcG proteins like Esc, E(z), Su(z)12, HDAC1/Rpd3, Caf1-55 and probably Pho. The two complexes however cooperate and interact together during the first 3 hours of development to establish PcG silencing. Part of the small subunit (SSU) processome, composed of more than 70 proteins and the RNA chaperone small nucleolar RNA (snoRNA) U3.

The protein resides in the nucleus. The protein localises to the nucleolus. It catalyses the reaction a cytidine in 18S rRNA + acetyl-CoA + ATP + H2O = an N(4)-acetylcytidine in 18S rRNA + ADP + phosphate + CoA + H(+). It carries out the reaction a cytidine in tRNA + acetyl-CoA + ATP + H2O = an N(4)-acetylcytidine in tRNA + ADP + phosphate + CoA + H(+). Its function is as follows. RNA cytidine acetyltransferase with specificity toward both 18S rRNA and tRNAs. Catalyzes the formation of N(4)-acetylcytidine (ac4C) in 18S rRNA. Required for early nucleolar cleavages of precursor rRNA at sites A0, A1 and A2 during 18S rRNA synthesis. Catalyzes the formation of ac4C in serine and leucine tRNAs. Requires a tRNA-binding adapter protein for full tRNA acetyltransferase activity but not for 18S rRNA acetylation. Polycomb group (PcG) protein. PcG proteins act by forming multiprotein complexes, which are required to maintain the transcriptionally repressive state of homeotic genes throughout development. PcG proteins are not required to initiate repression, but to maintain it during later stages of development. They probably act via the methylation of histones, rendering chromatin heritably changed in its expressibility. Part of the small subunit (SSU) processome, first precursor of the small eukaryotic ribosomal subunit. During the assembly of the SSU processome in the nucleolus, many ribosome biogenesis factors, an RNA chaperone and ribosomal proteins associate with the nascent pre-rRNA and work in concert to generate RNA folding, modifications, rearrangements and cleavage as well as targeted degradation of pre-ribosomal RNA by the RNA exosome. The polypeptide is RNA cytidine acetyltransferase (l(1)G0020) (Drosophila melanogaster (Fruit fly)).